The following is a 375-amino-acid chain: Anhydro-N-acetylmuramic acid kinase (375 aa).

18–25 is a binding site for ATP; that stretch reads GTSMDGID.

This sequence belongs to the anhydro-N-acetylmuramic acid kinase family.

The catalysed reaction is 1,6-anhydro-N-acetyl-beta-muramate + ATP + H2O = N-acetyl-D-muramate 6-phosphate + ADP + H(+). It participates in amino-sugar metabolism; 1,6-anhydro-N-acetylmuramate degradation. The protein operates within cell wall biogenesis; peptidoglycan recycling. Catalyzes the specific phosphorylation of 1,6-anhydro-N-acetylmuramic acid (anhMurNAc) with the simultaneous cleavage of the 1,6-anhydro ring, generating MurNAc-6-P. Is required for the utilization of anhMurNAc either imported from the medium or derived from its own cell wall murein, and thus plays a role in cell wall recycling. The chain is Anhydro-N-acetylmuramic acid kinase from Rhodospirillum rubrum (strain ATCC 11170 / ATH 1.1.1 / DSM 467 / LMG 4362 / NCIMB 8255 / S1).